The primary structure comprises 257 residues: N-acetylglucosaminyldiphosphoundecaprenol N-acetyl-beta-D-mannosaminyltransferase (257 aa).

This sequence belongs to the glycosyltransferase 26 family. TagA/TarA subfamily.

The enzyme catalyses UDP-N-acetyl-alpha-D-mannosamine + N-acetyl-alpha-D-glucosaminyl-di-trans,octa-cis-undecaprenyl diphosphate = N-acetyl-beta-D-mannosaminyl-(1-&gt;4)-N-acetyl-alpha-D-glucosaminyl di-trans,octa-cis-undecaprenyl diphosphate + UDP + H(+). It participates in cell wall biogenesis; poly(ribitol phosphate) teichoic acid biosynthesis. In terms of biological role, catalyzes the conversion of GlcNAc-PP-undecaprenol into ManNAc-GlcNAc-PP-undecaprenol, the first committed lipid intermediate in the de novo synthesis of teichoic acid. The sequence is that of N-acetylglucosaminyldiphosphoundecaprenol N-acetyl-beta-D-mannosaminyltransferase from Bacillus spizizenii (strain ATCC 23059 / NRRL B-14472 / W23) (Bacillus subtilis subsp. spizizenii).